Here is a 61-residue protein sequence, read N- to C-terminus: Large ribosomal subunit protein uL29 (61 aa).

Belongs to the universal ribosomal protein uL29 family.

The protein is Large ribosomal subunit protein uL29 of Campylobacter lari (strain RM2100 / D67 / ATCC BAA-1060).